A 331-amino-acid chain; its full sequence is Anthranilate phosphoribosyltransferase (331 aa).

5-phospho-alpha-D-ribose 1-diphosphate is bound by residues Gly79, 82–83 (GD), Thr87, 89–92 (NIST), 107–115 (KHGNYGATS), and Ala119. Residue Gly79 coordinates anthranilate. Ser91 contacts Mg(2+). Asn110 provides a ligand contact to anthranilate. Arg165 lines the anthranilate pocket. Mg(2+) is bound by residues Asp223 and Glu224.

Belongs to the anthranilate phosphoribosyltransferase family. Homodimer. Mg(2+) is required as a cofactor.

It carries out the reaction N-(5-phospho-beta-D-ribosyl)anthranilate + diphosphate = 5-phospho-alpha-D-ribose 1-diphosphate + anthranilate. The protein operates within amino-acid biosynthesis; L-tryptophan biosynthesis; L-tryptophan from chorismate: step 2/5. Functionally, catalyzes the transfer of the phosphoribosyl group of 5-phosphorylribose-1-pyrophosphate (PRPP) to anthranilate to yield N-(5'-phosphoribosyl)-anthranilate (PRA). The protein is Anthranilate phosphoribosyltransferase of Phocaeicola vulgatus (strain ATCC 8482 / DSM 1447 / JCM 5826 / CCUG 4940 / NBRC 14291 / NCTC 11154) (Bacteroides vulgatus).